A 189-amino-acid polypeptide reads, in one-letter code: Large ribosomal subunit protein bL17 (189 aa).

This sequence belongs to the bacterial ribosomal protein bL17 family. In terms of assembly, part of the 50S ribosomal subunit. Contacts protein L32.

The sequence is that of Large ribosomal subunit protein bL17 from Rhodococcus jostii (strain RHA1).